Here is a 393-residue protein sequence, read N- to C-terminus: NAD(P)H-quinone oxidoreductase subunit H, chloroplastic (393 aa).

It belongs to the complex I 49 kDa subunit family. As to quaternary structure, NDH is composed of at least 16 different subunits, 5 of which are encoded in the nucleus.

The protein localises to the plastid. It localises to the chloroplast thylakoid membrane. The enzyme catalyses a plastoquinone + NADH + (n+1) H(+)(in) = a plastoquinol + NAD(+) + n H(+)(out). It carries out the reaction a plastoquinone + NADPH + (n+1) H(+)(in) = a plastoquinol + NADP(+) + n H(+)(out). NDH shuttles electrons from NAD(P)H:plastoquinone, via FMN and iron-sulfur (Fe-S) centers, to quinones in the photosynthetic chain and possibly in a chloroplast respiratory chain. The immediate electron acceptor for the enzyme in this species is believed to be plastoquinone. Couples the redox reaction to proton translocation, and thus conserves the redox energy in a proton gradient. This is NAD(P)H-quinone oxidoreductase subunit H, chloroplastic from Saccharum hybrid (Sugarcane).